We begin with the raw amino-acid sequence, 440 residues long: tRNA-2-methylthio-N(6)-dimethylallyladenosine synthase (440 aa).

The MTTase N-terminal domain maps to 5 to 121 (KLLYLETFGC…LPELVRAAEK (117 aa)). Residues C14, C50, C84, C159, C163, and C166 each coordinate [4Fe-4S] cluster. Residues 145–375 (RTDGVSRFVT…LDLQRRITLE (231 aa)) form the Radical SAM core domain. The 63-residue stretch at 378-440 (KSFVGTVQQV…QNSLQGELCR (63 aa)) folds into the TRAM domain.

Belongs to the methylthiotransferase family. MiaB subfamily. As to quaternary structure, monomer. [4Fe-4S] cluster serves as cofactor.

Its subcellular location is the cytoplasm. The catalysed reaction is N(6)-dimethylallyladenosine(37) in tRNA + (sulfur carrier)-SH + AH2 + 2 S-adenosyl-L-methionine = 2-methylsulfanyl-N(6)-dimethylallyladenosine(37) in tRNA + (sulfur carrier)-H + 5'-deoxyadenosine + L-methionine + A + S-adenosyl-L-homocysteine + 2 H(+). In terms of biological role, catalyzes the methylthiolation of N6-(dimethylallyl)adenosine (i(6)A), leading to the formation of 2-methylthio-N6-(dimethylallyl)adenosine (ms(2)i(6)A) at position 37 in tRNAs that read codons beginning with uridine. In Geotalea uraniireducens (strain Rf4) (Geobacter uraniireducens), this protein is tRNA-2-methylthio-N(6)-dimethylallyladenosine synthase.